The chain runs to 121 residues: MARIAGIDLPKNKHIDRALTYIHGIGLTSARKILDAVELPYTMNSDDLDGETVNRIRKVIEADYTVEGDRRREVSMDIKRLTDLGCYRGRRHRMGLPCRGQKTKTNARTRKGPRRGAARRK.

Residues 92–121 are disordered; the sequence is HRMGLPCRGQKTKTNARTRKGPRRGAARRK. The segment covering 101–121 has biased composition (basic residues); it reads QKTKTNARTRKGPRRGAARRK.

Belongs to the universal ribosomal protein uS13 family. In terms of assembly, part of the 30S ribosomal subunit. Forms a loose heterodimer with protein S19. Forms two bridges to the 50S subunit in the 70S ribosome.

Located at the top of the head of the 30S subunit, it contacts several helices of the 16S rRNA. In the 70S ribosome it contacts the 23S rRNA (bridge B1a) and protein L5 of the 50S subunit (bridge B1b), connecting the 2 subunits; these bridges are implicated in subunit movement. Contacts the tRNAs in the A and P-sites. The sequence is that of Small ribosomal subunit protein uS13 from Desulfotalea psychrophila (strain LSv54 / DSM 12343).